The sequence spans 172 residues: MERAAKKEAVESLNGLFQTTSVAVVAHYSGLTVAQMQKLRSQMKAAGASVKVSKNRLAKIALEGTDVVAIGSLLKGPTVIATSDDPVAAPKVAVEFAKANEKFVILGGSMGKTVLNVDGVKALASLPSLDELRGKLVGLLVAPATKIAQLTTAPAAKVARVVQAYASKSEAA.

This sequence belongs to the universal ribosomal protein uL10 family. In terms of assembly, part of the ribosomal stalk of the 50S ribosomal subunit. The N-terminus interacts with L11 and the large rRNA to form the base of the stalk. The C-terminus forms an elongated spine to which L12 dimers bind in a sequential fashion forming a multimeric L10(L12)X complex.

Functionally, forms part of the ribosomal stalk, playing a central role in the interaction of the ribosome with GTP-bound translation factors. The protein is Large ribosomal subunit protein uL10 of Rhodopseudomonas palustris (strain HaA2).